A 357-amino-acid polypeptide reads, in one-letter code: Protein RecA (357 aa).

71–78 (GPESSGKT) is an ATP binding site.

This sequence belongs to the RecA family.

It localises to the cytoplasm. Functionally, can catalyze the hydrolysis of ATP in the presence of single-stranded DNA, the ATP-dependent uptake of single-stranded DNA by duplex DNA, and the ATP-dependent hybridization of homologous single-stranded DNAs. It interacts with LexA causing its activation and leading to its autocatalytic cleavage. The sequence is that of Protein RecA from Ehrlichia ruminantium (strain Gardel).